A 207-amino-acid chain; its full sequence is Large ribosomal subunit protein bL25 (207 aa).

Positions 182–207 (QDLGDESVQEEQAAESAEGESEGSED) are disordered.

The protein belongs to the bacterial ribosomal protein bL25 family. CTC subfamily. In terms of assembly, part of the 50S ribosomal subunit; part of the 5S rRNA/L5/L18/L25 subcomplex. Contacts the 5S rRNA. Binds to the 5S rRNA independently of L5 and L18.

This is one of the proteins that binds to the 5S RNA in the ribosome where it forms part of the central protuberance. This chain is Large ribosomal subunit protein bL25, found in Micrococcus luteus (strain ATCC 4698 / DSM 20030 / JCM 1464 / CCM 169 / CCUG 5858 / IAM 1056 / NBRC 3333 / NCIMB 9278 / NCTC 2665 / VKM Ac-2230) (Micrococcus lysodeikticus).